The sequence spans 175 residues: Nascent polypeptide-associated complex subunit beta (175 aa).

2 disordered regions span residues 1–36 and 129–175; these read MDKE…SQGD and RQAA…EELE. The NAC-A/B domain maps to 34–101; it reads QGDDRKLQAA…GQTKELTELV (68 aa). Over residues 149–163 the composition is skewed to acidic residues; that stretch reads EGDDEIPDLVDNFDE. Positions 164–175 are enriched in basic and acidic residues; the sequence is AEVKKSDLEELE.

The protein belongs to the NAC-beta family. Part of the nascent polypeptide-associated complex (NAC), consisting of EGD2 and EGD1. NAC associates with ribosomes via EGD1.

It is found in the cytoplasm. The protein localises to the nucleus. Component of the nascent polypeptide-associated complex (NAC), a dynamic component of the ribosomal exit tunnel, protecting the emerging polypeptides from interaction with other cytoplasmic proteins to ensure appropriate nascent protein targeting. The NAC complex also promotes mitochondrial protein import by enhancing productive ribosome interactions with the outer mitochondrial membrane and blocks the inappropriate interaction of ribosomes translating non-secretory nascent polypeptides with translocation sites in the membrane of the endoplasmic reticulum. EGD1 may act as a transcription factor that exert a negative effect on the expression of several genes that are transcribed by RNA polymerase II. In Cryptococcus neoformans var. neoformans serotype D (strain B-3501A) (Filobasidiella neoformans), this protein is Nascent polypeptide-associated complex subunit beta (EGD1).